The chain runs to 122 residues: Large ribosomal subunit protein uL14 (122 aa).

It belongs to the universal ribosomal protein uL14 family. Part of the 50S ribosomal subunit. Forms a cluster with proteins L3 and L19. In the 70S ribosome, L14 and L19 interact and together make contacts with the 16S rRNA in bridges B5 and B8.

Functionally, binds to 23S rRNA. Forms part of two intersubunit bridges in the 70S ribosome. This chain is Large ribosomal subunit protein uL14, found in Lactobacillus gasseri (strain ATCC 33323 / DSM 20243 / BCRC 14619 / CIP 102991 / JCM 1131 / KCTC 3163 / NCIMB 11718 / NCTC 13722 / AM63).